A 286-amino-acid polypeptide reads, in one-letter code: Transcription factor MafA (286 aa).

2 positions are modified to phosphoserine: serine 14 and serine 49. Residues 51–85 show a composition bias toward low complexity; it reads SSTPLSTPCSSVPSSPSFCAPSPGGQPSAGPTAAP. Residues 51-87 form a disordered region; it reads SSTPLSTPCSSVPSSPSFCAPSPGGQPSAGPTAAPLG. 2 positions are modified to phosphothreonine: threonine 53 and threonine 57. Phosphoserine occurs at positions 61 and 65. Threonine 113 carries the post-translational modification Phosphothreonine. Residues 126-167 form a disordered region; the sequence is HHHHHHHQSYESFRPQPFGGEELPPAAHHHNAHHHHHHHHLR. Positions 152 to 166 are enriched in basic residues; that stretch reads AHHHNAHHHHHHHHL. The interval 199–224 is basic motif; the sequence is RLKQNRRTLKNRGYAQSCRYKRVQQR. Residues 199–262 enclose the bZIP domain; that stretch reads RLKQNRRTLK…DLYKEKYEKL (64 aa). A leucine-zipper region spans residues 227-248; that stretch reads LENEKCQLQSQVEQLKQEVSRL. The disordered stretch occupies residues 265 to 286; it reads RGFPREPSPPAAPKTTAADFFM. The residue at position 272 (serine 272) is a Phosphoserine. Low complexity predominate over residues 277–286; the sequence is PKTTAADFFM.

The protein belongs to the bZIP family. Maf subfamily. In terms of assembly, forms homodimers or heterodimers. May interact (via leucine-zipper domain) with MAFB. May interact with FOS and JUN. Interacts with PCAF; this interaction impairs MAFA ubiquitination.

It is found in the nucleus. In terms of biological role, transcription factor involved in transcription regulation during lens development, including that of crystallin and filensin/BFSP1 genes. Binds to CRE-type MARE 5'-TGCTGACGTCAGCA-3' and TRE-type MARE 5'-TGCTGACTCAGCA-3' DNA sequences. The polypeptide is Transcription factor MafA (MAFA) (Gallus gallus (Chicken)).